Reading from the N-terminus, the 313-residue chain is Ribosomal RNA small subunit methyltransferase H (313 aa).

Residues 35 to 37 (GGH), Asp-55, Phe-79, Asp-101, and Gln-108 contribute to the S-adenosyl-L-methionine site.

The protein belongs to the methyltransferase superfamily. RsmH family.

Its subcellular location is the cytoplasm. The enzyme catalyses cytidine(1402) in 16S rRNA + S-adenosyl-L-methionine = N(4)-methylcytidine(1402) in 16S rRNA + S-adenosyl-L-homocysteine + H(+). Its function is as follows. Specifically methylates the N4 position of cytidine in position 1402 (C1402) of 16S rRNA. The sequence is that of Ribosomal RNA small subunit methyltransferase H from Escherichia coli O6:H1 (strain CFT073 / ATCC 700928 / UPEC).